A 154-amino-acid polypeptide reads, in one-letter code: Melatonin receptor type 1A (154 aa).

The Cytoplasmic portion of the chain corresponds to 1 to 19; sequence YCYICHSLKYDRWYSNRNS. Residues 20 to 40 form a helical membrane-spanning segment; it reads LCCVFLICVLTLVAIVPNLCM. At 41-62 the chain is on the extracellular side; it reads GTLQYDPRIYSCTFAQSVSSAY. A helical transmembrane segment spans residues 63–83; it reads TIAVVVFHFLVPMVIVIFRYL. Topologically, residues 84 to 115 are cytoplasmic; the sequence is RIWVLVLQIRWRAKPENNPRLKPQDFRNFVTM. A helical transmembrane segment spans residues 116 to 136; the sequence is FVVFVLFAICWAPLNFIGLAV. Topologically, residues 137-149 are extracellular; sequence ASDPASMAPRIPE.

It belongs to the G-protein coupled receptor 1 family.

Its subcellular location is the cell membrane. High affinity receptor for melatonin. Likely to mediate the reproductive and circadian actions of melatonin. The activity of this receptor is mediated by pertussis toxin sensitive G proteins that inhibit adenylate cyclase activity. The sequence is that of Melatonin receptor type 1A (MTNR1A) from Sus scrofa (Pig).